The following is a 525-amino-acid chain: Protein disulfide-isomerase A2 (525 aa).

The N-terminal stretch at 1–21 (MSCQLLPVLLLLLLRASCPWG) is a signal peptide. Positions 27–152 (RSPSEEPPEE…IAEWLRRRVG (126 aa)) constitute a Thioredoxin 1 domain. Active-site nucleophile residues include Cys71 and Cys74. Cys71 and Cys74 form a disulfide bridge. 2 N-linked (GlcNAc...) asparagine glycosylation sites follow: Asn127 and Asn284. Residues 367–496 (VLNGQVKPYL…FSKFLDNGGV (130 aa)) form the Thioredoxin 2 domain. Catalysis depends on nucleophile residues Cys418 and Cys421. Cys418 and Cys421 are disulfide-bonded. The segment at 498–525 (PTEEPLEEPAAPFPEPPANSTMGSKEEL) is disordered. The N-linked (GlcNAc...) asparagine glycan is linked to Asn516. The span at 516–525 (NSTMGSKEEL) shows a compositional bias: polar residues. Residues 522–525 (KEEL) carry the Prevents secretion from ER motif.

The protein belongs to the protein disulfide isomerase family. As to quaternary structure, monomer; predominantly as monomer under reducing conditions. Homodimer; disulfide-linked. Part of a large chaperone multiprotein complex comprising DNAJB11, HSP90B1, HSPA5, HYOU, PDIA2, PDIA4, PDIA6, PPIB, SDF2L1, UGGT1 and very small amounts of ERP29, but not, or at very low levels, CALR nor CANX. Post-translationally, the disulfide-linked homodimer exhibits an enhanced chaperone activity. Glycosylated.

Its subcellular location is the endoplasmic reticulum lumen. It carries out the reaction Catalyzes the rearrangement of -S-S- bonds in proteins.. Functionally, acts as an intracellular estrogen-binding protein. May be involved in modulating cellular levels and biological functions of estrogens in the pancreas. May act as a chaperone that inhibits aggregation of misfolded proteins. In Pongo abelii (Sumatran orangutan), this protein is Protein disulfide-isomerase A2 (PDIA2).